The primary structure comprises 660 residues: Replication protein E1 (660 aa).

Positions 1–60 are disordered; it reads MADNSGTEGEEEDCSEAERAGGWFMVEAIVDRRTGDTISSDEDEEDEGEDMVDFIDDRPI. Residues 39 to 54 show a composition bias toward acidic residues; that stretch reads SSDEDEEDEGEDMVDF. The short motif at 87 to 89 is the Nuclear localization signal element; that stretch reads KRK. Phosphoserine; by host occurs at positions 93, 97, 109, and 122. The short motif at 108-117 is the Nuclear export signal element; that stretch reads LSPRLDAIKL. A disordered region spans residues 128 to 196; the sequence is LFQLPDSGYG…DGEESQPLST (69 aa). Residues 136-163 are compositionally biased toward polar residues; it reads YGQTQVDTDTGPSQVQDGCETGDQNGRQ. The segment covering 169–186 has biased composition (basic and acidic residues); the sequence is SGTKDGENGSQEEERAGG. Residues 197-363 form a DNA-binding region region; that stretch reads ETEKGACGVL…QTMVGHALQE (167 aa). The region spanning 462-612 is the SF3 helicase domain; it reads VEFIPFLCAF…CPLTSKGEPV (151 aa). ATP is bound at residue 488 to 495; sequence GPADTGKS. K569 is covalently cross-linked (Glycyl lysine isopeptide (Lys-Gly) (interchain with G-Cter in SUMO)). The span at 635–644 shows a compositional bias: acidic residues; sequence DPDDEEENGE. Residues 635–660 form a disordered region; the sequence is DPDDEEENGEPSEPFRCVPGQNTRTV.

It belongs to the papillomaviridae E1 protein family. Can form hexamers. Interacts with E2 protein; this interaction increases E1 DNA binding specificity. Interacts with host DNA polymerase subunit POLA2. Interacts with host single stranded DNA-binding protein RPA1. Interacts with host TOP1; this interaction stimulates the enzymatic activity of TOP1. Post-translationally, phosphorylated. In terms of processing, sumoylated.

It is found in the host nucleus. It carries out the reaction Couples ATP hydrolysis with the unwinding of duplex DNA by translocating in the 3'-5' direction.. The catalysed reaction is ATP + H2O = ADP + phosphate + H(+). ATP-dependent DNA 3'-5' helicase required for initiation of viral DNA replication. It forms a complex with the viral E2 protein. The E1-E2 complex binds to the replication origin which contains binding sites for both proteins. During the initial step, a dimer of E1 interacts with a dimer of protein E2 leading to a complex that binds the viral origin of replication with high specificity. Then, a second dimer of E1 displaces the E2 dimer in an ATP-dependent manner to form the E1 tetramer. Following this, two E1 monomers are added to each half of the site, which results in the formation of two E1 trimers on the viral ori. Subsequently, two hexamers will be created. The double hexamer acts as a bi-directional helicase machinery and unwinds the viral DNA and then recruits the host DNA polymerase to start replication. This chain is Replication protein E1, found in Human papillomavirus 29.